A 375-amino-acid chain; its full sequence is Meiotic driver cw27 (375 aa).

Disordered regions lie at residues 1-42 and 74-103; these read MKNK…STLP and DYDENRLLITDEGNNPPNTHRENHSSGTTD. The span at 11 to 29 shows a compositional bias: basic and acidic residues; sequence SMDELSTKNDNEIDLEKGP. The next 7 helical transmembrane spans lie at 108 to 128, 145 to 165, 172 to 192, 208 to 228, 245 to 265, 272 to 292, and 336 to 356; these read FLIKLLISFTSIILFNAPAVC, WTLIGFWCASSLIIFTFSWCF, AVKVTVIFLAQCIKVTAISLA, EMMIIIWILWLIICCILFGCV, TISAVLFLIVSSVCIPIWTLW, LQVLGIHGIIALLVNGLMSLF, and VIGFILGGIANAIGGIANAIG.

The protein belongs to the WTF family. In terms of assembly, homomer. Forms protein aggregates. The two isoforms can interact with each other and with themselves. High sequence similarity is required for their interaction.

It localises to the spore membrane. It is found in the vacuole. The protein localises to the membrane. Its subcellular location is the ascus epiplasm. The protein resides in the cytoplasm. It localises to the endoplasmic reticulum. Functionally, promotes unequal transmission of alleles from the parental zygote to progeny spores by acting as poison/antidote system where the poison and antidote proteins are produced from the same locus; the poison component is trans-acting and targets all spores within an ascus whereas the antidote component is spore-specific, leading to poisoning of all progeny that do not inherit the allele. In terms of biological role, localizes isoform 2 to the vacuole thereby facilitating its degradation. Forms toxic aggregates that disrupt spore maturation. The sequence is that of Meiotic driver cw27 from Schizosaccharomyces pombe (Fission yeast).